We begin with the raw amino-acid sequence, 89 residues long: Small ribosomal subunit protein uS15 (89 aa).

This sequence belongs to the universal ribosomal protein uS15 family. Part of the 30S ribosomal subunit. Forms a bridge to the 50S subunit in the 70S ribosome, contacting the 23S rRNA.

Its function is as follows. One of the primary rRNA binding proteins, it binds directly to 16S rRNA where it helps nucleate assembly of the platform of the 30S subunit by binding and bridging several RNA helices of the 16S rRNA. Forms an intersubunit bridge (bridge B4) with the 23S rRNA of the 50S subunit in the ribosome. This is Small ribosomal subunit protein uS15 from Mycobacterium leprae (strain Br4923).